Here is a 444-residue protein sequence, read N- to C-terminus: Glutamate--tRNA ligase 1 (444 aa).

Positions Pro-8–Asn-18 match the 'HIGH' region motif. Positions Lys-239 to Arg-243 match the 'KMSKS' region motif. Lys-242 contributes to the ATP binding site.

It belongs to the class-I aminoacyl-tRNA synthetase family. Glutamate--tRNA ligase type 1 subfamily. In terms of assembly, monomer.

Its subcellular location is the cytoplasm. The catalysed reaction is tRNA(Glu) + L-glutamate + ATP = L-glutamyl-tRNA(Glu) + AMP + diphosphate. Functionally, catalyzes the attachment of glutamate to tRNA(Glu) in a two-step reaction: glutamate is first activated by ATP to form Glu-AMP and then transferred to the acceptor end of tRNA(Glu). This Zymomonas mobilis subsp. mobilis (strain ATCC 31821 / ZM4 / CP4) protein is Glutamate--tRNA ligase 1.